We begin with the raw amino-acid sequence, 452 residues long: Probable ECA polymerase (452 aa).

11 helical membrane-spanning segments follow: residues 6 to 26, 37 to 57, 63 to 83, 118 to 138, 155 to 175, 181 to 201, 207 to 227, 228 to 248, 341 to 361, 378 to 398, and 410 to 430; these read FSGL…LTWF, VFFS…TSVL, VGVA…CFYG, VILM…NGFL, GVAL…VYFL, AWLF…MIVG, IIIA…ISLW, MLAA…LKRY, LVVM…GLII, YKAA…IVLA, and VFFL…FWLF.

The protein belongs to the WzyE family. In terms of assembly, probably part of a complex composed of WzxE, WzyE and WzzE.

The protein localises to the cell inner membrane. It participates in bacterial outer membrane biogenesis; enterobacterial common antigen biosynthesis. In terms of biological role, probably involved in the polymerization of enterobacterial common antigen (ECA) trisaccharide repeat units. In Salmonella heidelberg (strain SL476), this protein is Probable ECA polymerase.